The following is a 953-amino-acid chain: Zinc finger protein 618 (953 aa).

At Met1 the chain carries N-acetylmethionine. Residues 1–56 (MSQPDGAAAPQVDGASAPGRKSAVNRERLKRSQKSSKVEGPEPVPAEASLSAEQGT) are disordered. Glycyl lysine isopeptide (Lys-Gly) (interchain with G-Cter in SUMO2) cross-links involve residues Lys63 and Lys81. 2 consecutive C2H2-type zinc fingers follow at residues 146–168 (YECG…VRAH) and 187–209 (YTCD…RDLH). A Glycyl lysine isopeptide (Lys-Gly) (interchain with G-Cter in SUMO2) cross-link involves residue Lys238. The C2H2-type 3 zinc finger occupies 255–277 (YTCEFCGKQYKYYTPYQEHVALH). Disordered stretches follow at residues 283–305 (APGW…EVTP) and 337–390 (TPPA…SSEP). Residues 339 to 354 (PATQTQTFRAPNSGSP) are compositionally biased toward polar residues. A compositionally biased stretch (basic and acidic residues) spans 365–379 (FSRRVESKAQNHFEE). A C2H2-type 4 zinc finger spans residues 391-413 (YTCGACGIQFQFYSNLLEHMQSH). Residues 419–428 (NNITSNQSRS) are compositionally biased toward polar residues. The disordered stretch occupies residues 419-461 (NNITSNQSRSPPAAVEEKWKPQAQRNSANNTTTSGLTPNSVIP). Residue Lys436 forms a Glycyl lysine isopeptide (Lys-Gly) (interchain with G-Cter in SUMO2) linkage. The segment covering 441 to 458 (AQRNSANNTTTSGLTPNS) has biased composition (polar residues).

Belongs to the krueppel C2H2-type zinc-finger protein family. In terms of assembly, interacts with UHRF2.

The protein localises to the nucleus. The protein resides in the chromosome. Regulates UHRF2 function as a specific 5-hydroxymethylcytosine (5hmC) reader by regulating its chromatin localization. The chain is Zinc finger protein 618 (Znf618) from Mus musculus (Mouse).